Consider the following 364-residue polypeptide: Peptidyl-prolyl cis-trans isomerase D (364 aa).

The region spanning 7–170 (YFDITIGNKP…EDAVIAKCGE (164 aa)) is the PPIase cyclophilin-type domain. TPR repeat units follow at residues 208-241 (ATHL…LNEK), 261-294 (IPCY…DSKY), and 301-334 (TKAY…DPED).

Belongs to the cyclophilin-type PPIase family. PPIase D subfamily.

Its subcellular location is the cytoplasm. It carries out the reaction [protein]-peptidylproline (omega=180) = [protein]-peptidylproline (omega=0). PPIases accelerate the folding of proteins. It catalyzes the cis-trans isomerization of proline imidic peptide bonds in oligopeptides. The sequence is that of Peptidyl-prolyl cis-trans isomerase D (cyp12) from Rhizopus delemar (strain RA 99-880 / ATCC MYA-4621 / FGSC 9543 / NRRL 43880) (Mucormycosis agent).